The chain runs to 539 residues: Glucans biosynthesis protein D (539 aa).

Positions 1–31 (MHRRNLLKASMALAAYTGLSASGLLAARAWA) form a signal peptide, tat-type signal.

The protein belongs to the OpgD/OpgG family. Post-translationally, predicted to be exported by the Tat system. The position of the signal peptide cleavage has not been experimentally proven.

Its subcellular location is the periplasm. Its pathway is glycan metabolism; osmoregulated periplasmic glucan (OPG) biosynthesis. In terms of biological role, probably involved in the control of the structural glucose backbone of osmoregulated periplasmic glucans (OPGs). The polypeptide is Glucans biosynthesis protein D (Pseudomonas fluorescens (strain ATCC BAA-477 / NRRL B-23932 / Pf-5)).